We begin with the raw amino-acid sequence, 510 residues long: GTPase Der (510 aa).

2 consecutive EngA-type G domains span residues 4-168 (PVVA…AEKM) and 222-395 (IKIA…ACAT). Residues 10–17 (GRPNVGKS), 57–61 (DTGGI), 120–123 (NKTD), 228–235 (GRPNVGKS), 275–279 (DTAGV), and 340–343 (NKWD) contribute to the GTP site. In terms of domain architecture, KH-like spans 396–480 (QKMTTSMLTR…PIRLLFQEGN (85 aa)).

This sequence belongs to the TRAFAC class TrmE-Era-EngA-EngB-Septin-like GTPase superfamily. EngA (Der) GTPase family. As to quaternary structure, associates with the 50S ribosomal subunit.

Its function is as follows. GTPase that plays an essential role in the late steps of ribosome biogenesis. The polypeptide is GTPase Der (Pasteurella multocida (strain Pm70)).